The primary structure comprises 441 residues: Diuretic hormone receptor (441 aa).

Residues Asn99, Asn107, and Asn112 are each glycosylated (N-linked (GlcNAc...) asparagine). A helical membrane pass occupies residues 135 to 158; the sequence is FVFFVGFCLSLVAIAVAIWIFLYF. The Cytoplasmic portion of the chain corresponds to 159–166; the sequence is KDLRCLRN. Residues 167 to 187 form a helical membrane-spanning segment; the sequence is TIHTNLMATYICNDATWIISA. Residues 188–194 are Extracellular-facing; that stretch reads VVQEYVE. A helical membrane pass occupies residues 195–224; sequence NGGLCSVLAVLMHYFYLTNFFWMFVEGLYL. The Cytoplasmic segment spans residues 225–238; it reads FLLVVATFTGEKVK. Residues 239-260 form a helical membrane-spanning segment; the sequence is LQIYIIIGWGIPGVIVVTWAII. The Extracellular portion of the chain corresponds to 261–291; the sequence is KHLGKTAPDNAGESHPMVLLIKHCPWMAEDY. The helical transmembrane segment at 292-315 threads the bilayer; that stretch reads FDWIHQAPVITVLAVNLVFLFSIM. At 316 to 338 the chain is on the cytoplasmic side; the sequence is WVLITKLQSANTAETQQYRKATK. The chain crosses the membrane as a helical span at residues 339–357; sequence ALLVLFPLLGITYILMMQG. At 358–371 the chain is on the extracellular side; sequence PMDGVAGHVFRNAQ. Residues 372-391 form a helical membrane-spanning segment; sequence ALLLSLQGFTVALFYCFLNT. Topologically, residues 392–441 are cytoplasmic; that stretch reads EVQNTLRHRMSRWRETRTVGGGRRYTLSGHSKDWSPRSRTESIRCLQHRS.

Belongs to the G-protein coupled receptor 2 family. Expressed in Malpighian tubules.

The protein localises to the cell membrane. Its function is as follows. Receptor for the insect diurectic hormone. The activity of this receptor is mediated by G proteins which activate adenylyl cyclase. This Acheta domesticus (House cricket) protein is Diuretic hormone receptor.